A 507-amino-acid chain; its full sequence is ATP synthase subunit beta (507 aa).

A disordered region spans residues 1-22; it reads MSGLASKAKSRVKSSKGKNSTN. 183–190 is a binding site for ATP; the sequence is GGAGVGKT.

This sequence belongs to the ATPase alpha/beta chains family. As to quaternary structure, F-type ATPases have 2 components, CF(1) - the catalytic core - and CF(0) - the membrane proton channel. CF(1) has five subunits: alpha(3), beta(3), gamma(1), delta(1), epsilon(1). CF(0) has three main subunits: a(1), b(2) and c(9-12). The alpha and beta chains form an alternating ring which encloses part of the gamma chain. CF(1) is attached to CF(0) by a central stalk formed by the gamma and epsilon chains, while a peripheral stalk is formed by the delta and b chains.

The protein localises to the cell inner membrane. The enzyme catalyses ATP + H2O + 4 H(+)(in) = ADP + phosphate + 5 H(+)(out). In terms of biological role, produces ATP from ADP in the presence of a proton gradient across the membrane. The catalytic sites are hosted primarily by the beta subunits. In Ehrlichia chaffeensis (strain ATCC CRL-10679 / Arkansas), this protein is ATP synthase subunit beta.